Here is a 77-residue protein sequence, read N- to C-terminus: Sec-independent protein translocase protein TatA (77 aa).

Residues 3–23 (VFGIGLPELIVILVVALLIFG) traverse the membrane as a helical segment. Residues 56-77 (TAALEEEQQAKAEAESPREISP) form a disordered region. Over residues 63 to 77 (QQAKAEAESPREISP) the composition is skewed to basic and acidic residues.

The protein belongs to the TatA/E family. In terms of assembly, forms a complex with TatC.

The protein resides in the cell inner membrane. Part of the twin-arginine translocation (Tat) system that transports large folded proteins containing a characteristic twin-arginine motif in their signal peptide across membranes. TatA could form the protein-conducting channel of the Tat system. The chain is Sec-independent protein translocase protein TatA from Thermosynechococcus vestitus (strain NIES-2133 / IAM M-273 / BP-1).